A 2028-amino-acid chain; its full sequence is Transient receptor potential cation channel subfamily M member 6 (2028 aa).

Residues 1 to 747 are Cytoplasmic-facing; that stretch reads MQVKKSWIEG…MWMGRLKMRK (747 aa). The disordered stretch occupies residues 577 to 601; sequence QPYKSKEKPEDSQKSKKKSKERQSL. Over residues 580–590 the composition is skewed to basic and acidic residues; it reads KSKEKPEDSQK. Residues 748 to 768 form a helical membrane-spanning segment; it reads NSWLKIIISILLPPMILTLEF. At 769-847 the chain is on the extracellular side; sequence KSKAEMSHVP…YEFYSAPFVK (79 aa). The chain crosses the membrane as a helical span at residues 848-868; that stretch reads FWFYTMAYLAFLMLFTYTVLV. Over 869–910 the chain is Cytoplasmic; sequence EMQPQPSVHEWLVIIYIFTNAIEKVREICISEPSKFKQKVKM. A helical membrane pass occupies residues 911 to 931; the sequence is WLSEYWNLMETVAIGLFAVGF. Over 932-945 the chain is Extracellular; it reads GLRWGHPPLQTAGR. The chain crosses the membrane as a helical span at residues 946-966; it reads LIYCIDIIFWFSRLMDFFAVN. Over 967–978 the chain is Cytoplasmic; it reads QHAGPYVTMIAK. A helical membrane pass occupies residues 979-999; sequence MAANMFYIVIIMAIVLLSFGV. Residues 1000 to 1018 lie on the Extracellular side of the membrane; the sequence is ARKAILSPKEPPSWRLARD. An intramembrane region (pore-forming) is located at residues 1019–1039; it reads IVFEPYWMMYGEVYASDIDVC. Over 1040 to 1053 the chain is Extracellular; it reads SNETSCPPGSFLTP. Residues 1054–1074 traverse the membrane as a helical segment; sequence FLQAVYLFVQYIIMVNLLIAC. Over 1075–2028 the chain is Cytoplasmic; that stretch reads FNNIYLDIKS…RSSLEDHTRL (954 aa). Basic and acidic residues-rich tracts occupy residues 1313–1323 and 1665–1677; these read KREASHVREEQ and DHLRQPQENRDKT. Disordered stretches follow at residues 1313 to 1339 and 1658 to 1694; these read KREASHVREEQEEREMEQRTTASGISH and RHTTQASDHLRQPQENRDKTPTWNSGSTSLSRSFLTR. A compositionally biased stretch (low complexity) spans 1682–1694; the sequence is SGSTSLSRSFLTR. Thr1730 bears the Phosphothreonine; by autocatalysis mark. In terms of domain architecture, Alpha-type protein kinase spans 1756–1986; it reads TLDKSMSSWS…CCGKLRLPDL (231 aa). ADP contacts are provided by Gly1783, Gly1784, Leu1785, Arg1786, and Lys1810. Thr1857 carries the phosphothreonine; by autocatalysis modification. Residues Glu1882 and Met1885 each coordinate ADP. Residue His1915 participates in Zn(2+) binding. Asp1929 functions as the Proton acceptor in the catalytic mechanism. Residue Asp1939 participates in ADP binding. Zn(2+)-binding residues include His1972, Cys1974, and Cys1978. Residues 2009-2028 are disordered; sequence TEELPERDKNRSSLEDHTRL. Basic and acidic residues predominate over residues 2012–2028; the sequence is LPERDKNRSSLEDHTRL.

The protein in the C-terminal section; belongs to the protein kinase superfamily. Alpha-type protein kinase family. ALPK subfamily. It in the N-terminal section; belongs to the transient receptor (TC 1.A.4) family. LTrpC subfamily. TRPM6 sub-subfamily. Forms heteromers with TRPM7; TRPM6 increases the current amplitude of TRPM6/7 heteromers as compared to TRPM7 homomers. Interacts (via kinase domain) with RACK1. Post-translationally, autophosphorylated; autophosphorylation controls the protein kinase activity of TRPM6 towards their substrates. Autophosphorylation of Thr-1857 in the kinase domain is essential for the inhibitory effect of RACK1. In terms of processing, the C-terminus of TRPM6 is proteolytically cleaved in vivo, in a cell type-specific fashion, releasing the kinase module from the transmembrane domain. The cleaved kinase fragments are translocated to the nucleus to phosphorylate histones and regulate gene expression.

Its subcellular location is the cell membrane. It is found in the apical cell membrane. The protein localises to the nucleus. The catalysed reaction is L-seryl-[protein] + ATP = O-phospho-L-seryl-[protein] + ADP + H(+). It catalyses the reaction L-threonyl-[protein] + ATP = O-phospho-L-threonyl-[protein] + ADP + H(+). The enzyme catalyses Mg(2+)(in) = Mg(2+)(out). It carries out the reaction Ca(2+)(in) = Ca(2+)(out). The catalysed reaction is Zn(2+)(in) = Zn(2+)(out). Strongly inhibited by intracellular Mg(2+); unlikely to be active at physiological levels of intracellular Mg(2+). In the heteromeric TRPM6-TRPM7 channels complexes, TRPM7 are able to offset the very high sensitivity of TRPM6 to cytosolic Mg(2+) to physiologically relevant concentrations, whereas TRPM6 relieve TRPM7 from the inhibitory action of Mg-ATP. Consequently, the association of TRPM6 with TRPM7 allow for high constitutive activity of TRPM6/7 in the presence of physiological levels of Mg(2+) and Mg-ATP. The kinase activity is controlled through the autophosphorylation of a serine/threonine-rich region located to the N-terminal of the catalytic domain. Bifunctional protein that combines an ion channel with an intrinsic kinase domain, enabling it to modulate cellular functions either by conducting ions through the pore or by phosphorylating downstream proteins via its kinase domain. Crucial for Mg(2+) homeostasis. Has an important role in epithelial magnesium transport and in the active Mg(2+) absorption in the gut and kidney. However, whether TRPM6 forms functional homomeric channels by itself or functions primarily as a subunit of heteromeric TRPM6-TRPM7 channels, is still under debate. Its function is as follows. The C-terminal kinase domain can be cleaved from the channel segment in a cell-type-specific fashion. The cleaved kinase fragments can translocate to the nucleus, and bind chromatin-remodeling complex proteins to ultimately phosphorylate specific Ser/Thr residues of histones known to be functionally important for cell differentiation and development. This is Transient receptor potential cation channel subfamily M member 6 (Trpm6) from Mus musculus (Mouse).